A 344-amino-acid polypeptide reads, in one-letter code: 3,4-dihydroxy-2-butanone 4-phosphate synthase (344 aa).

Residues Met-1–Glu-202 are DHBP synthase. D-ribulose 5-phosphate-binding positions include Arg-27–Glu-28, Asp-32, Arg-139–Thr-143, and Glu-163. Glu-28 is a Mg(2+) binding site. A Mg(2+)-binding site is contributed by His-142. The segment at Asn-203–Leu-344 is GTP cyclohydrolase II-like.

This sequence in the N-terminal section; belongs to the DHBP synthase family. It in the C-terminal section; belongs to the GTP cyclohydrolase II family. It depends on Mg(2+) as a cofactor. The cofactor is Mn(2+).

It carries out the reaction D-ribulose 5-phosphate = (2S)-2-hydroxy-3-oxobutyl phosphate + formate + H(+). The protein operates within cofactor biosynthesis; riboflavin biosynthesis; 2-hydroxy-3-oxobutyl phosphate from D-ribulose 5-phosphate: step 1/1. Catalyzes the conversion of D-ribulose 5-phosphate to formate and 3,4-dihydroxy-2-butanone 4-phosphate. The chain is 3,4-dihydroxy-2-butanone 4-phosphate synthase (ribB) from Helicobacter pylori (strain J99 / ATCC 700824) (Campylobacter pylori J99).